The primary structure comprises 417 residues: Senescence-associated protein AAF, chloroplastic (417 aa).

The transit peptide at 1–36 directs the protein to the chloroplast; that stretch reads MALNVSKVVPNSPILVKSVNASRSRRVLLAYVHHPL.

It belongs to the ATA15/OSA15 family. In terms of tissue distribution, expressed in leaves. Expressed in 7-day-old seedlings, roots, rosette leaves, cauline leaves and flower buds.

The protein localises to the plastid. Its subcellular location is the chloroplast. Functionally, involved in modulation of redox homeostasis to regulate leaf senescence mediated by age and stress factors during plant development. Its function is dependent of EIN2, a central factor of ethylene signaling. This Arabidopsis thaliana (Mouse-ear cress) protein is Senescence-associated protein AAF, chloroplastic.